Here is a 329-residue protein sequence, read N- to C-terminus: G-protein coupled bile acid receptor 1 (329 aa).

Residues 1–19 (MTSNSTREVPSPVPAGALG) lie on the Extracellular side of the membrane. Asn4 carries N-linked (GlcNAc...) asparagine glycosylation. Residues 20-40 (LSLALASLIVAANLLLAVGIA) traverse the membrane as a helical segment. Residues 41–52 (GDRRLRSPPAGC) lie on the Cytoplasmic side of the membrane. The helical transmembrane segment at 53 to 73 (FFLSLLLAGLLTGLALPALPV) threads the bilayer. The Extracellular segment spans residues 74 to 85 (LWSQSRRGYWSC). An intrachain disulfide couples Cys85 to Cys155. Residues 86–106 (LFLYLAPNFCFLSLLANLLLV) form a helical membrane-spanning segment. Over 107–125 (HGERYMAVLRPLRPRGSMR) the chain is Cytoplasmic. The chain crosses the membrane as a helical span at residues 126 to 146 (LALLLTWAAPLLFASLPALGW). The Extracellular segment spans residues 147–165 (NHWAPGGNCSSQAVFPAPY). Residue Asn154 is glycosylated (N-linked (GlcNAc...) asparagine). A helical membrane pass occupies residues 166–186 (LYLEIYGLLLPAVGAAALLSV). Residues 187–230 (RVLVTAHRQLQDIRRLERAVCRGAPSALARALTWRQARAQAGAT) are Cytoplasmic-facing. Residues 231-251 (LLFGLCWGPYVATLLLSVLAF) traverse the membrane as a helical segment. Topologically, residues 252 to 261 (EQRPPLGPGT) are extracellular. The chain crosses the membrane as a helical span at residues 262–282 (LLSLISLGSASAAAVPVAMGL). Residues 283–329 (GDQRYTGPWRVAAQKWLRMLRGRPQSSPGPSTAYHTSSQSSVDLDLN) are Cytoplasmic-facing. Residues 304–329 (GRPQSSPGPSTAYHTSSQSSVDLDLN) form a disordered region. Positions 306 to 329 (PQSSPGPSTAYHTSSQSSVDLDLN) are enriched in polar residues.

Belongs to the G-protein coupled receptor 1 family.

The protein resides in the cell membrane. In terms of biological role, receptor for bile acid. Bile acid-binding induces its internalization, activation of extracellular signal-regulated kinase and intracellular cAMP production. May be involved in the suppression of macrophage functions by bile acids. Involved in bile acid promoted GLP1R secretion. The protein is G-protein coupled bile acid receptor 1 (GPBAR1) of Bos taurus (Bovine).